The primary structure comprises 869 residues: Aminopeptidase N (869 aa).

Substrate-binding positions include glutamate 122 and 262–266 (GAMEN). A Zn(2+)-binding site is contributed by histidine 298. Glutamate 299 acts as the Proton acceptor in catalysis. Zn(2+)-binding residues include histidine 302 and glutamate 321.

Belongs to the peptidase M1 family. Requires Zn(2+) as cofactor.

It is found in the cell inner membrane. It carries out the reaction Release of an N-terminal amino acid, Xaa-|-Yaa- from a peptide, amide or arylamide. Xaa is preferably Ala, but may be most amino acids including Pro (slow action). When a terminal hydrophobic residue is followed by a prolyl residue, the two may be released as an intact Xaa-Pro dipeptide.. Aminopeptidase N is involved in the degradation of intracellular peptides generated by protein breakdown during normal growth as well as in response to nutrient starvation. The polypeptide is Aminopeptidase N (pepN) (Haemophilus influenzae (strain ATCC 51907 / DSM 11121 / KW20 / Rd)).